Consider the following 269-residue polypeptide: tRNA pseudouridine synthase A (269 aa).

Asp51 serves as the catalytic Nucleophile. Residue Tyr109 coordinates substrate.

The protein belongs to the tRNA pseudouridine synthase TruA family. Homodimer.

It catalyses the reaction uridine(38/39/40) in tRNA = pseudouridine(38/39/40) in tRNA. Functionally, formation of pseudouridine at positions 38, 39 and 40 in the anticodon stem and loop of transfer RNAs. The chain is tRNA pseudouridine synthase A from Histophilus somni (strain 129Pt) (Haemophilus somnus).